The following is a 256-amino-acid chain: Thiazole synthase (256 aa).

The active-site Schiff-base intermediate with DXP is K95. Residues G156, 182-183, and 204-205 contribute to the 1-deoxy-D-xylulose 5-phosphate site; these read AG and NT.

The protein belongs to the ThiG family. Homotetramer. Forms heterodimers with either ThiH or ThiS.

Its subcellular location is the cytoplasm. It carries out the reaction [ThiS sulfur-carrier protein]-C-terminal-Gly-aminoethanethioate + 2-iminoacetate + 1-deoxy-D-xylulose 5-phosphate = [ThiS sulfur-carrier protein]-C-terminal Gly-Gly + 2-[(2R,5Z)-2-carboxy-4-methylthiazol-5(2H)-ylidene]ethyl phosphate + 2 H2O + H(+). The protein operates within cofactor biosynthesis; thiamine diphosphate biosynthesis. In terms of biological role, catalyzes the rearrangement of 1-deoxy-D-xylulose 5-phosphate (DXP) to produce the thiazole phosphate moiety of thiamine. Sulfur is provided by the thiocarboxylate moiety of the carrier protein ThiS. In vitro, sulfur can be provided by H(2)S. In Citrobacter koseri (strain ATCC BAA-895 / CDC 4225-83 / SGSC4696), this protein is Thiazole synthase.